A 231-amino-acid polypeptide reads, in one-letter code: MARGKIQIKRIENQTNRQVTYSKRRNGLFKKANELTVLCDAKVSIIMISSTGKLHEFISPSITTKQLFDLYQKTVGVDLWNSHYEKMQEQLRKLKEVNRNLRKEIRQRMGESLNDLNYEQLEELMENVDNSLKLIRERKYKVIGNQIETFKKKVRNVEEIHRNLLLEFDARQEDPYGLVEQEGDYNSVLGFPNGGHRILALRLQPNHHQPNHHHHLHSGGGSDITTFALLE.

The 56-residue stretch at 3–58 (RGKIQIKRIENQTNRQVTYSKRRNGLFKKANELTVLCDAKVSIIMISSTGKLHEFI) folds into the MADS-box domain. In terms of domain architecture, K-box spans 84–174 (YEKMQEQLRK…LLEFDARQED (91 aa)).

Predominantly expressed in petals and stamens, less in carpels and sepals.

It localises to the nucleus. Transcription factor involved in the genetic control of flower development. Necessary for the normal development of petals. Absence of the PMADS1 protein causes transformation of petals into sepals. The protein is Floral homeotic protein PMADS 1 (PMADS1) of Petunia hybrida (Petunia).